Here is a 150-residue protein sequence, read N- to C-terminus: Transthyretin (150 aa).

Positions 1 to 20 (MGSSSLLLVCLAGMVYLTEA) are cleaved as a signal peptide. The residue at position 33 (C33) is a Sulfocysteine. Residues K38, E77, and S140 each contribute to the L-thyroxine site.

The protein belongs to the transthyretin family. As to quaternary structure, homotetramer. Dimer of dimers. In the homotetramer, subunits assemble around a central channel that can accommodate two ligand molecules. Interacts with RBP4. Post-translationally, sulfonation of the reactive cysteine Cys-33 enhances the stability of the native conformation of TTR, avoiding misassembly of the protein leading to amyloid formation. Detected in choroid plexus (at protein level). Detected in choroid plexus.

Its subcellular location is the secreted. In terms of biological role, thyroid hormone-binding protein. Probably transports thyroxine from the bloodstream to the brain. The chain is Transthyretin (TTR) from Tiliqua rugosa (Shingleback lizard).